The primary structure comprises 184 residues: H(2)/formate:CoB-CoM heterodisulfide,ferredoxin reductase subunit C2 (184 aa).

4Fe-4S ferredoxin-type domains are found at residues 24–54 and 65–97; these read GEKE…AYRT and IDSV…TEII. C34, C37, C40, C44, C77, C80, C83, and C87 together coordinate [4Fe-4S] cluster.

This sequence belongs to the HdrC family. In terms of assembly, the heterodisulfide reductase is composed of three subunits; HdrA, HdrB and HdrC. B1 and B2 subunits are interchangeable, as are the C1 and C2 subunits. The heterodisulfide reductase forms a supercomplex with formylmethanofuran dehydrogenase (Fwd), F(420)-non-reducing hydrogenase (Vhu) and formate dehydrogenase (Fdh). The cofactor is [4Fe-4S] cluster.

It carries out the reaction coenzyme B + coenzyme M + 2 reduced [2Fe-2S]-[ferredoxin] + 2 H(+) = coenzyme M-coenzyme B heterodisulfide + 2 H2 + 2 oxidized [2Fe-2S]-[ferredoxin]. It catalyses the reaction coenzyme B + coenzyme M + 2 reduced [2Fe-2S]-[ferredoxin] + 2 CO2 = coenzyme M-coenzyme B heterodisulfide + 2 formate + 2 oxidized [2Fe-2S]-[ferredoxin]. It participates in cofactor metabolism; coenzyme M-coenzyme B heterodisulfide reduction; coenzyme B and coenzyme M from coenzyme M-coenzyme B heterodisulfide: step 1/1. In terms of biological role, part of a complex that catalyzes the reversible reduction of CoM-S-S-CoB to the thiol-coenzymes H-S-CoM (coenzyme M) and H-S-CoB (coenzyme B). The protein is H(2)/formate:CoB-CoM heterodisulfide,ferredoxin reductase subunit C2 of Methanococcus maripaludis (strain DSM 14266 / JCM 13030 / NBRC 101832 / S2 / LL).